The primary structure comprises 276 residues: Exosome complex component RRP43 (276 aa).

A2 carries the N-acetylalanine modification.

This sequence belongs to the RNase PH family. In terms of assembly, component of the RNA exosome core complex (Exo-9), composed of EXOSC1, EXOSC2, EXOSC3, EXOSC4, EXOSC5, EXOSC6, EXOSC7, EXOSC8 and EXOSC9; within the complex interacts with EXOSC5 and EXOSC6. The catalytically inactive RNA exosome core complex (Exo-9) associates with the catalytic subunit EXOSC10/RRP6. Exo-9 may associate with DIS3 to form the nucleolar exosome complex, or DIS3L to form the cytoplasmic exosome complex. Exo-9 is formed by a hexameric base ring consisting of the heterodimers EXOSC4-EXOSC9, EXOSC5-EXOSC8 and EXOSC6-EXOSC7, and a cap ring consisting of EXOSC1, EXOSC2 and EXOSC3. The RNA exosome complex associates with cofactors C1D/RRP47, MPHOSPH6/MPP6 and MTREX/MTR4.

The protein localises to the cytoplasm. Its subcellular location is the nucleus. The protein resides in the nucleolus. In terms of biological role, non-catalytic component of the RNA exosome complex which has 3'-&gt;5' exoribonuclease activity and participates in a multitude of cellular RNA processing and degradation events. In the nucleus, the RNA exosome complex is involved in proper maturation of stable RNA species such as rRNA, snRNA and snoRNA, in the elimination of RNA processing by-products and non-coding 'pervasive' transcripts, such as antisense RNA species and promoter-upstream transcripts (PROMPTs), and of mRNAs with processing defects, thereby limiting or excluding their export to the cytoplasm. The RNA exosome may be involved in Ig class switch recombination (CSR) and/or Ig variable region somatic hypermutation (SHM) by targeting AICDA deamination activity to transcribed dsDNA substrates. In the cytoplasm, the RNA exosome complex is involved in general mRNA turnover and specifically degrades inherently unstable mRNAs containing AU-rich elements (AREs) within their 3' untranslated regions, and in RNA surveillance pathways, preventing translation of aberrant mRNAs. It seems to be involved in degradation of histone mRNA. The catalytic inactive RNA exosome core complex of 9 subunits (Exo-9) is proposed to play a pivotal role in the binding and presentation of RNA for ribonucleolysis, and to serve as a scaffold for the association with catalytic subunits and accessory proteins or complexes. EXOSC8 binds to ARE-containing RNAs. The sequence is that of Exosome complex component RRP43 (Exosc8) from Mus musculus (Mouse).